The chain runs to 475 residues: 3-isopropylmalate dehydratase large subunit (475 aa).

3 residues coordinate [4Fe-4S] cluster: cysteine 347, cysteine 407, and cysteine 410. The disordered stretch occupies residues 418–442 (LAPGERSASTSNRNFEGRQGKGGRT).

It belongs to the aconitase/IPM isomerase family. LeuC type 1 subfamily. As to quaternary structure, heterodimer of LeuC and LeuD. The cofactor is [4Fe-4S] cluster.

It carries out the reaction (2R,3S)-3-isopropylmalate = (2S)-2-isopropylmalate. Its pathway is amino-acid biosynthesis; L-leucine biosynthesis; L-leucine from 3-methyl-2-oxobutanoate: step 2/4. Catalyzes the isomerization between 2-isopropylmalate and 3-isopropylmalate, via the formation of 2-isopropylmaleate. The polypeptide is 3-isopropylmalate dehydratase large subunit (Streptomyces griseus subsp. griseus (strain JCM 4626 / CBS 651.72 / NBRC 13350 / KCC S-0626 / ISP 5235)).